The chain runs to 160 residues: Transcriptional repressor NrdR (160 aa).

Positions 1–11 are enriched in polar residues; sequence MRCPSCNSLDT. The interval 1-20 is disordered; it reads MRCPSCNSLDTQVKDSRPTE. Residues 3-34 fold into a zinc finger; that stretch reads CPSCNSLDTQVKDSRPTEDSAVIRRRRVCMAC. The ATP-cone domain occupies 49-139; that stretch reads LTVIKRNGRR…VYRNFREAKD (91 aa).

The protein belongs to the NrdR family. Zn(2+) serves as cofactor.

Negatively regulates transcription of bacterial ribonucleotide reductase nrd genes and operons by binding to NrdR-boxes. The chain is Transcriptional repressor NrdR from Nitrobacter winogradskyi (strain ATCC 25391 / DSM 10237 / CIP 104748 / NCIMB 11846 / Nb-255).